A 425-amino-acid polypeptide reads, in one-letter code: AFP homolog 2 (425 aa).

Disordered stretches follow at residues 1-207 (MDDD…SGTE) and 288-327 (PFAG…DNSN). Residues 7–17 (LELSLGLSCGG) are necessary and sufficient for the interaction with TOPLESS. A compositionally biased stretch (low complexity) spans 20-34 (GKAKGNNNNNAGSSS). Residues 37-54 (YRAEGGDRSAKVIDDFKN) are compositionally biased toward basic and acidic residues. A compositionally biased stretch (low complexity) spans 66 to 81 (PSSGSQRSDSGQQPPQ). A compositionally biased stretch (basic and acidic residues) spans 124 to 140 (NDDKKKEKDSSHVDMHE). Polar residues-rich tracts occupy residues 146–158 (SHVS…GSTA), 185–197 (TDTN…TGQR), and 288–299 (PFAGRVPSNSAT). The interval 322 to 425 (TGDNSNLNTA…MGMTAASAHT (104 aa)) is necessary and sufficient for the interaction with the JAZ proteins.

Belongs to the Ninja family. Component of a complex at least composed of TOPLESS, TPR2, TPR3, TIFY4B/PPD2, MYC3/ATR2 and TIFY3B/JAZ12. Interacts (via C-terminus) with TIFY10A/JAZ1; TIFY10B/JAZ2; TIFY6B/JAZ3; TIFY6A/JAZ4; TIFY11A/JAZ5; TIFY11B/JAZ6; TIFY7/JAZ9; TIFY9/JAZ10; TIFY3A/JAZ11; TIFY3B/JAZ12; TIFY4A/PPD1; TIFY4B/PPD2 and TIFY8 (via TIFY domain). Interacts with TOPLESS. Interacts with PAT1H1.

It localises to the nucleus. In terms of biological role, acts as a transcriptional repressor. Negative regulator of jasmonate responses. Connects the JAZ proteins and the non-JAZ protein TIFY8 with the TOPLESS corepressors. This Arabidopsis thaliana (Mouse-ear cress) protein is AFP homolog 2.